Consider the following 35-residue polypeptide: Beta/delta-theraphotoxin-Pre1a (35 aa).

Cystine bridges form between Cys3–Cys18, Cys10–Cys23, and Cys17–Cys30.

It belongs to the neurotoxin 10 (Hwtx-1) family. As to expression, expressed by the venom gland.

Its subcellular location is the secreted. Gating-modifier toxin that both inhibits the peak current of human Nav1.1/SCN1A, rat Nav1.2/SCN2A, human Nav1.6/SCN8A, and human Nav1.7/SCN9A and concurrently inhibits fast inactivation of human Nav1.1 and rat Nav1.3/SCN3A. The relative rank order potency for Nav modulation is Nav1.3 (inactivation EC(50)=45 nM) &gt; Nav1.7 &gt; Nav1.2 &gt; Nav1.1 (inactivation) &gt; Nav1.1 &gt; Nav1.6 &gt; Nav1.3 (IC(50)=8 uM). The DII and DIV S3-S4 loops of Nav channel voltage sensors are important for the interaction of this toxin with Nav channels but cannot account for its unique subtype selectivity. It is the variability of the S1-S2 loops between NaV channels which contributes substantially to the selectivity profile observed for this toxin, particularly with regards to fast inactivation. This toxin may bind the channel in the resting state. This is Beta/delta-theraphotoxin-Pre1a from Psalmopoeus reduncus (Costa Rican orangemouth tarantula).